Reading from the N-terminus, the 230-residue chain is Sugar fermentation stimulation protein homolog (230 aa).

The protein belongs to the SfsA family.

The polypeptide is Sugar fermentation stimulation protein homolog (Clostridium acetobutylicum (strain ATCC 824 / DSM 792 / JCM 1419 / IAM 19013 / LMG 5710 / NBRC 13948 / NRRL B-527 / VKM B-1787 / 2291 / W)).